The following is a 209-amino-acid chain: UPF0319 protein VFMJ11_1730 (209 aa).

The first 21 residues, 1–21 (MKIQSIFAASFCLLSSISAHA), serve as a signal peptide directing secretion.

It belongs to the UPF0319 family.

The protein is UPF0319 protein VFMJ11_1730 of Aliivibrio fischeri (strain MJ11) (Vibrio fischeri).